We begin with the raw amino-acid sequence, 427 residues long: Citrate synthase (427 aa).

Active-site residues include His306 and Asp363.

This sequence belongs to the citrate synthase family. As to quaternary structure, homohexamer.

It carries out the reaction oxaloacetate + acetyl-CoA + H2O = citrate + CoA + H(+). Its pathway is carbohydrate metabolism; tricarboxylic acid cycle; isocitrate from oxaloacetate: step 1/2. With respect to regulation, allosterically inhibited by NADH. The chain is Citrate synthase (gltA) from Salmonella typhimurium (strain LT2 / SGSC1412 / ATCC 700720).